Consider the following 88-residue polypeptide: U1-hexatoxin-Iw1c (88 aa).

The N-terminal stretch at 1-17 (LKFVVLICLVIMASTSA) is a signal peptide. The residue at position 18 (Gln-18) is a Pyrrolidone carboxylic acid. Intrachain disulfides connect Cys-20-Cys-31, Cys-25-Cys-39, Cys-30-Cys-65, Cys-49-Cys-73, and Cys-67-Cys-80. Residues 86-88 (RSE) constitute a propeptide that is removed on maturation.

It belongs to the MIT-like AcTx family. Expressed by the venom gland.

It is found in the secreted. The chain is U1-hexatoxin-Iw1c from Illawarra wisharti (Illawarra funnel-web spider).